The chain runs to 197 residues: Putative protein N5-glutamine methyltransferase MJ0928 (197 aa).

S-adenosyl-L-methionine-binding positions include 42–46 (GVGTG), D64, and N105. 105-108 (NPPY) serves as a coordination point for substrate.

The protein belongs to the eukaryotic/archaeal PrmC-related family.

The enzyme catalyses L-glutaminyl-[protein] + S-adenosyl-L-methionine = N(5)-methyl-L-glutaminyl-[protein] + S-adenosyl-L-homocysteine + H(+). Putative protein methyltransferase using S-adenosyl-L-methionine as the methyl donor. May methylate a Gln residue in target proteins. The sequence is that of Putative protein N5-glutamine methyltransferase MJ0928 from Methanocaldococcus jannaschii (strain ATCC 43067 / DSM 2661 / JAL-1 / JCM 10045 / NBRC 100440) (Methanococcus jannaschii).